A 291-amino-acid polypeptide reads, in one-letter code: MIMTNEATTPSGQPLGISHKPSKSGAMFTKFKAENKPAFIGYLPYGFPNPDVSLDAFKTMVEHGVDAVEIGLPYSDPVMDGPVIQAAASIALNNGETIKRVFEAVETVANAGGVPLIMSYWNLVYHYGVERFARDFENAGGAGLITPDLIPDEAGEWIEASDRHGLDRIFLVSPDSSTERLETVARNARGFVYAAARMGVTGERATIDASPELLVERTRQAGAENVCVGIGVSTAEQGAKVGSYADGVIVGSALVHTLLADDNKTARDPKEGLKLLAAKSEELAEGIHNAR.

Residues E69 and D80 each act as proton acceptor in the active site.

Belongs to the TrpA family. In terms of assembly, tetramer of two alpha and two beta chains.

It catalyses the reaction (1S,2R)-1-C-(indol-3-yl)glycerol 3-phosphate + L-serine = D-glyceraldehyde 3-phosphate + L-tryptophan + H2O. It participates in amino-acid biosynthesis; L-tryptophan biosynthesis; L-tryptophan from chorismate: step 5/5. In terms of biological role, the alpha subunit is responsible for the aldol cleavage of indoleglycerol phosphate to indole and glyceraldehyde 3-phosphate. The polypeptide is Tryptophan synthase alpha chain (Bifidobacterium longum (strain NCC 2705)).